A 163-amino-acid polypeptide reads, in one-letter code: Small ribosomal subunit protein bS18c (163 aa).

2 disordered regions span residues 1–52 (MYIS…IGPG) and 144–163 (NLRN…SSDC). Over residues 7–48 (PFRKSKQPFRKSKQPFHKSKQPFRKFKQPFRKSKQPFRRRSR) the composition is skewed to basic residues.

It belongs to the bacterial ribosomal protein bS18 family. Part of the 30S ribosomal subunit.

It is found in the plastid. The protein localises to the chloroplast. This is Small ribosomal subunit protein bS18c from Saccharum hybrid (Sugarcane).